Reading from the N-terminus, the 181-residue chain is MSETRMAQNMDTTDEQYLRLIELLSNYDSTLEQLQKGFQDGYIQLSRSNYYNKDSLRGNYGEDYWDETYIGQLMATVEEKNSKVVVEIVKRKAQDKQEKKEEEDNKLTQRKKGTKPEKQKTQSHKLKQDYDPILMFGGVLSVPSSLRQSQTSFKGCIPLIAQLINYKNEILTLVETLSEQE.

Ser2 carries the post-translational modification N-acetylalanine. 2 stretches are compositionally biased toward basic and acidic residues: residues 93–107 and 114–125; these read AQDK…DNKL and TKPEKQKTQSHK. Residues 93-125 form a disordered region; that stretch reads AQDKQEKKEEEDNKLTQRKKGTKPEKQKTQSHK.

Required for V-ATPase activity. The chain is Vacuolar ATPase assembly protein VMA22 (VMA22) from Saccharomyces cerevisiae (strain ATCC 204508 / S288c) (Baker's yeast).